We begin with the raw amino-acid sequence, 244 residues long: Troponin I, cardiac muscle (244 aa).

Residues Met1–Val25 show a composition bias toward acidic residues. The tract at residues Met1–Ser67 is disordered. Ser2 is modified (N-acetylserine). At Ser2 the chain carries Phosphoserine; by CK2. Residues Pro27 to Leu42 show a composition bias toward pro residues.

Belongs to the troponin I family. Binds to actin and tropomyosin. As to expression, heart.

Troponin I is the inhibitory subunit of troponin, the thin filament regulatory complex which confers calcium-sensitivity to striated muscle actomyosin ATPase activity. This chain is Troponin I, cardiac muscle (tnni3), found in Xenopus laevis (African clawed frog).